The following is a 35-amino-acid chain: Photosystem II reaction center protein T (35 aa).

Residues 3–23 form a helical membrane-spanning segment; the sequence is ALVYTFLLVSTLGIIFFAIFF.

This sequence belongs to the PsbT family. As to quaternary structure, PSII is composed of 1 copy each of membrane proteins PsbA, PsbB, PsbC, PsbD, PsbE, PsbF, PsbH, PsbI, PsbJ, PsbK, PsbL, PsbM, PsbT, PsbY, PsbZ, Psb30/Ycf12, at least 3 peripheral proteins of the oxygen-evolving complex and a large number of cofactors. It forms dimeric complexes.

Its subcellular location is the plastid. It localises to the chloroplast thylakoid membrane. Found at the monomer-monomer interface of the photosystem II (PS II) dimer, plays a role in assembly and dimerization of PSII. PSII is a light-driven water plastoquinone oxidoreductase, using light energy to abstract electrons from H(2)O, generating a proton gradient subsequently used for ATP formation. This chain is Photosystem II reaction center protein T, found in Stewartia pseudocamellia (Japanese stewartia).